A 187-amino-acid polypeptide reads, in one-letter code: ATP synthase subunit delta (187 aa).

Belongs to the ATPase delta chain family. In terms of assembly, F-type ATPases have 2 components, F(1) - the catalytic core - and F(0) - the membrane proton channel. F(1) has five subunits: alpha(3), beta(3), gamma(1), delta(1), epsilon(1). F(0) has three main subunits: a(1), b(2) and c(10-14). The alpha and beta chains form an alternating ring which encloses part of the gamma chain. F(1) is attached to F(0) by a central stalk formed by the gamma and epsilon chains, while a peripheral stalk is formed by the delta and b chains.

The protein localises to the cell membrane. F(1)F(0) ATP synthase produces ATP from ADP in the presence of a proton or sodium gradient. F-type ATPases consist of two structural domains, F(1) containing the extramembraneous catalytic core and F(0) containing the membrane proton channel, linked together by a central stalk and a peripheral stalk. During catalysis, ATP synthesis in the catalytic domain of F(1) is coupled via a rotary mechanism of the central stalk subunits to proton translocation. Functionally, this protein is part of the stalk that links CF(0) to CF(1). It either transmits conformational changes from CF(0) to CF(1) or is implicated in proton conduction. The chain is ATP synthase subunit delta from Mesomycoplasma hyopneumoniae (strain 232) (Mycoplasma hyopneumoniae).